Reading from the N-terminus, the 164-residue chain is V-type proton ATPase subunit c3 (164 aa).

Over 1–11 (MSTFSGDETAP) the chain is Lumenal. Residues 12-32 (FFGFLGAAAALVFSCMGAAYG) form a helical membrane-spanning segment. Residues 33 to 54 (TAKSGVGVASMGVMRPELVMKS) are Cytoplasmic-facing. Residues 55–75 (IVPVVMAGVLGIYGLIIAVII) traverse the membrane as a helical segment. The Lumenal portion of the chain corresponds to 76–94 (STGINPKAKSYYLFDGYAH). A helical membrane pass occupies residues 95-116 (LSSGLACGLAGLSAGMAIGIVG). Residues 117 to 128 (DAGVRANAQQPK) are Cytoplasmic-facing. The helical transmembrane segment at 129–154 (LFVGMILILIFAEALALYGLIVGIIL) threads the bilayer. Topologically, residues 155–164 (SSRAGQSRAE) are lumenal.

It belongs to the V-ATPase proteolipid subunit family. V-ATPase is a heteromultimeric enzyme composed of a peripheral catalytic V1 complex (components A to H) attached to an integral membrane V0 proton pore complex (components: a, c, c'', d and e). The proteolipid components c and c'' are present as a hexameric ring that forms the proton-conducting pore. Expressed in leaf, root, flower and silique.

It is found in the vacuole membrane. Its function is as follows. Proton-conducting pore forming subunit of the membrane integral V0 complex of vacuolar ATPase. V-ATPase is responsible for acidifying a variety of intracellular compartments in eukaryotic cells. The polypeptide is V-type proton ATPase subunit c3 (VHA-c3) (Arabidopsis thaliana (Mouse-ear cress)).